The chain runs to 1409 residues: Copia protein (1409 aa).

The segment at 230 to 247 (VKCHHCGREGHIKKDCFH) adopts a CCHC-type zinc-finger fold. Asp292 functions as the For protease activity in the catalytic mechanism. The region spanning 476–644 (HIKRPLFVVH…TPYEMWHNKK (169 aa)) is the Integrase catalytic domain. Disordered regions lie at residues 760–780 (SKES…QTEF) and 805–851 (NESK…NDGI). The span at 827–841 (ESRESETAEHLKEIG) shows a compositional bias: basic and acidic residues.

The polypeptide is Copia protein (GIP) (Drosophila melanogaster (Fruit fly)).